The sequence spans 150 residues: Macrodomain Ter protein (150 aa).

The protein belongs to the MatP family. As to quaternary structure, homodimer.

Its subcellular location is the cytoplasm. Required for spatial organization of the terminus region of the chromosome (Ter macrodomain) during the cell cycle. Prevents early segregation of duplicated Ter macrodomains during cell division. Binds specifically to matS, which is a 13 bp signature motif repeated within the Ter macrodomain. This is Macrodomain Ter protein from Salmonella agona (strain SL483).